We begin with the raw amino-acid sequence, 340 residues long: Glyceraldehyde-3-phosphate dehydrogenase (340 aa).

NAD(+)-binding positions include 11–12 and glycine 111; that span reads SI. A D-glyceraldehyde 3-phosphate-binding site is contributed by 140–142; sequence SCN. Residue cysteine 141 is the Nucleophile of the active site. Position 169 (arginine 169) interacts with NAD(+). Position 195-196 (195-196) interacts with D-glyceraldehyde 3-phosphate; the sequence is HG. Glutamine 303 is an NAD(+) binding site.

The protein belongs to the glyceraldehyde-3-phosphate dehydrogenase family. Homotetramer.

The protein localises to the cytoplasm. The catalysed reaction is D-glyceraldehyde 3-phosphate + phosphate + NADP(+) = (2R)-3-phospho-glyceroyl phosphate + NADPH + H(+). The enzyme catalyses D-glyceraldehyde 3-phosphate + phosphate + NAD(+) = (2R)-3-phospho-glyceroyl phosphate + NADH + H(+). It functions in the pathway carbohydrate degradation; glycolysis; pyruvate from D-glyceraldehyde 3-phosphate: step 1/5. The chain is Glyceraldehyde-3-phosphate dehydrogenase from Methanococcus maripaludis (strain DSM 14266 / JCM 13030 / NBRC 101832 / S2 / LL).